The chain runs to 154 residues: Protein X (154 aa).

The segment at 68 to 117 (PCALRFTSARRMETTVNAHQFLPKVLYKRTLGLSVMSTTDLEAYFKDCLF) is mitochondrial targeting sequence.

It belongs to the orthohepadnavirus protein X family. In terms of assembly, may form homodimer. May interact with host CEBPA, CFLAR, CREB1, DDB1, E4F1, HBXIP, HSPD1/HSP60, NFKBIA, POLR2E and SMAD4. Interacts with host SMC5-SMC6 complex and induces its degradation. Interacts with host TRPC4AP; leading to prevent ubiquitination of TRPC4AP. Interacts with host PLSCR1; this interaction promotes ubiquitination and degradation of HBx and impairs HBx-mediated cell proliferation. Post-translationally, a fraction may be phosphorylated in insect cells and HepG2 cells, a human hepatoblastoma cell line. Phosphorylated in vitro by host protein kinase C or mitogen-activated protein kinase. N-acetylated in insect cells.

It localises to the host cytoplasm. The protein resides in the host nucleus. Its subcellular location is the host mitochondrion. Functionally, multifunctional protein that plays a role in silencing host antiviral defenses and promoting viral transcription. Does not seem to be essential for HBV infection. May be directly involved in development of cirrhosis and liver cancer (hepatocellular carcinoma). Most of cytosolic activities involve modulation of cytosolic calcium. The effect on apoptosis is controversial depending on the cell types in which the studies have been conducted. May induce apoptosis by localizing in mitochondria and causing loss of mitochondrial membrane potential. May also modulate apoptosis by binding host CFLAR, a key regulator of the death-inducing signaling complex (DISC). Promotes viral transcription by using the host E3 ubiquitin ligase DDB1 to target the SMC5-SMC6 complex to proteasomal degradation. This host complex would otherwise bind to viral episomal DNA, and prevents its transcription. Moderately stimulates transcription of many different viral and cellular transcription elements. Promoters and enhancers stimulated by HBx contain DNA binding sites for NF-kappa-B, AP-1, AP-2, c-EBP, ATF/CREB, or the calcium-activated factor NF-AT. This Homo sapiens (Human) protein is Protein X.